The sequence spans 179 residues: Orotate phosphoribosyltransferase (179 aa).

Residues Arg94, Lys95, Lys98, His100, and 120 to 128 (EDTSTTGAS) each bind 5-phospho-alpha-D-ribose 1-diphosphate. Orotate contacts are provided by Thr124 and Arg152.

Belongs to the purine/pyrimidine phosphoribosyltransferase family. PyrE subfamily. Homodimer. Requires Mg(2+) as cofactor.

It carries out the reaction orotidine 5'-phosphate + diphosphate = orotate + 5-phospho-alpha-D-ribose 1-diphosphate. The protein operates within pyrimidine metabolism; UMP biosynthesis via de novo pathway; UMP from orotate: step 1/2. In terms of biological role, catalyzes the transfer of a ribosyl phosphate group from 5-phosphoribose 1-diphosphate to orotate, leading to the formation of orotidine monophosphate (OMP). This chain is Orotate phosphoribosyltransferase, found in Mycobacterium leprae (strain TN).